We begin with the raw amino-acid sequence, 492 residues long: Cobyric acid synthase (492 aa).

Positions 259 to 453 (HTTVAVVAYP…LHGLFEDAVA (195 aa)) constitute a GATase cobBQ-type domain. The Nucleophile role is filled by Cys340. His445 is an active-site residue.

It belongs to the CobB/CobQ family. CobQ subfamily.

It participates in cofactor biosynthesis; adenosylcobalamin biosynthesis. Catalyzes amidations at positions B, D, E, and G on adenosylcobyrinic A,C-diamide. NH(2) groups are provided by glutamine, and one molecule of ATP is hydrogenolyzed for each amidation. The polypeptide is Cobyric acid synthase (Paracidovorax citrulli (strain AAC00-1) (Acidovorax citrulli)).